The sequence spans 252 residues: Flagellar brake protein YcgR (252 aa).

The PilZ domain occupies Gln-118–Glu-236.

The protein belongs to the YcgR family. Monomer. Interacts with the flagellar basal bodies.

It localises to the bacterial flagellum basal body. Its function is as follows. Acts as a flagellar brake, regulating swimming and swarming in a bis-(3'-5') cyclic diguanylic acid (c-di-GMP)-dependent manner. Binds 1 c-di-GMP dimer per subunit. Increasing levels of c-di-GMP lead to decreased motility. The sequence is that of Flagellar brake protein YcgR from Yersinia pseudotuberculosis serotype I (strain IP32953).